Here is an 81-residue protein sequence, read N- to C-terminus: Putative membrane protein insertion efficiency factor (81 aa).

The protein belongs to the UPF0161 family.

It is found in the cell inner membrane. Its function is as follows. Could be involved in insertion of integral membrane proteins into the membrane. In Legionella pneumophila (strain Lens), this protein is Putative membrane protein insertion efficiency factor.